The following is a 553-amino-acid chain: MGSDITATPAWQALSRHHDEIRAKDLRGLFADDPTRGTGFALTVGDLYIDYSKHRVTRETLDLLLDLARTAGLPAKRDAMFSGAHINTSEDRAVLHTALRLPRDASLTVDGQDVVADVHEVLDRMGDFTDRLRSGEWRGATGERITTVVNIGIGGSDLGPVMVDQALRHYADAGISARFVSNVDPADLVAKLNGLDPATTLFIIASKTFSTLETLTNATAARRWLVDGLGGSAGQDAVSKHFVAVSTNAKLVDDFGIDTANMFGFWDWVGGRYSVDSAIGLSVMAVIGRERFAEFLAGFHLVDEHFRSAPLEANAPVLLGLIGLWYSNFFGAETRAVLPYSNDLARFAAYLQQLTMESNGKSVRADGTPVSTGTGEIFWGEPGTNGQHAFYQLLHQGTRLVPADFIGFSEPTDDLPTADGTGSMHDLLMSNFFAQTQVLAFGKTAEEITGEGTPPNVVPHKVMPGNRPSTSILATKLTPSVVGQLIALYEHQVFVEGVIWGIDSFDQWGVELGKTQAKALLPVLTGADSPAAQSDSSTDALVRRYRTERGRTA.

Glu357 acts as the Proton donor in catalysis. Active-site residues include His388 and Lys514. A disordered region spans residues 527-553 (ADSPAAQSDSSTDALVRRYRTERGRTA). Residues 541-553 (LVRRYRTERGRTA) show a composition bias toward basic and acidic residues.

It belongs to the GPI family.

Its subcellular location is the cytoplasm. It carries out the reaction alpha-D-glucose 6-phosphate = beta-D-fructose 6-phosphate. It participates in carbohydrate biosynthesis; gluconeogenesis. The protein operates within carbohydrate degradation; glycolysis; D-glyceraldehyde 3-phosphate and glycerone phosphate from D-glucose: step 2/4. Catalyzes the reversible isomerization of glucose-6-phosphate to fructose-6-phosphate. The protein is Glucose-6-phosphate isomerase of Mycolicibacterium vanbaalenii (strain DSM 7251 / JCM 13017 / BCRC 16820 / KCTC 9966 / NRRL B-24157 / PYR-1) (Mycobacterium vanbaalenii).